The following is a 160-amino-acid chain: Protein max (160 aa).

The segment covering M1–E13 has biased composition (acidic residues). The segment at M1 to K40 is disordered. S2 carries the N-acetylserine modification. Phosphoserine is present on residues S2 and S11. A bHLH domain is found at D23–M74. Residues N29–K40 show a composition bias toward basic and acidic residues. The residue at position 66 (K66) is an N6-acetyllysine. The segment at H81–L102 is leucine-zipper. The interval A105–S160 is disordered. S107 bears the Phosphoserine mark. The span at S107–T124 shows a compositional bias: polar residues. K153 and K154 each carry N6-acetyllysine.

This sequence belongs to the MAX family. As to quaternary structure, efficient DNA binding requires dimerization with another bHLH protein. Binds DNA as a heterodimer with MYC or MAD. Part of the E2F6.com-1 complex in G0 phase composed of E2F6, MGA, MAX, TFDP1, CBX3, BAT8, EUHMTASE1, RING1, RNF2, MBLR, L3MBTL2 and YAF2. Component of some MLL1/MLL complex, at least composed of the core components KMT2A/MLL1, ASH2L, HCFC1/HCF1, WDR5 and RBBP5, as well as the facultative components BACC1, CHD8, E2F6, HSP70, INO80C, KANSL1, LAS1L, MAX, MCRS1, MGA, MYST1/MOF, PELP1, PHF20, PRP31, RING2, RUVB1/TIP49A, RUVB2/TIP49B, SENP3, TAF1, TAF4, TAF6, TAF7, TAF9 and TEX10. Interacts with SPAG9. The heterodimer MYC:MAX interacts with ABI1; the interaction may enhance MYC:MAX transcriptional activity. Post-translationally, phosphorylated.

The protein localises to the nucleus. The protein resides in the cell projection. It is found in the dendrite. Functionally, transcription regulator. Forms a sequence-specific DNA-binding protein complex with MYC or MAD which recognizes the core sequence 5'-CAC[GA]TG-3'. The MYC:MAX complex is a transcriptional activator, whereas the MAD:MAX complex is a repressor. May repress transcription via the recruitment of a chromatin remodeling complex containing H3 'Lys-9' histone methyltransferase activity. Represses MYC transcriptional activity from E-box elements. The polypeptide is Protein max (Rattus norvegicus (Rat)).